The primary structure comprises 303 residues: Hemolysin E (303 aa).

C87 and C285 form a disulfide bridge. A helical transmembrane segment spans residues 183-203 (AGVVAGPFGLIISYSIAAGVV).

Belongs to the hemolysin E family. In terms of assembly, monomer and oligomer. In periplasm, it is present as a monomer, while in outer membrane vesicles, it oligomerizes to form a pore structure that is active. The pore is formed by a dodecamer. Post-translationally, in periplasm, it forms a disulfide bond, which prevents the oligomerization. In outer membrane vesicles, the redox status prevents formation of the disulfide bond, leading to oligomerization and pore formation.

It is found in the secreted. Its subcellular location is the periplasm. It localises to the host cell membrane. Toxin, which has some hemolytic activity towards mammalian cells. Acts by forming a pore-like structure upon contact with mammalian cells. The protein is Hemolysin E (hlyE) of Escherichia coli O157:H7.